The primary structure comprises 273 residues: MGKLLRKPLNERIAPGVTLVQDINQGNSPLSYVGFRLIELEEDAVYQETLDGLECCIVALTGKISVSEGDHVFSEIGTRANVFEKIPTDSVFISGGRAFQVKADAEKARVALCYSPADRNLPTTLIKASDNSIEQRGKYQNKRLVHNILPDVSEVASSLLVVEVYTDGGNFSSYPPHKHDHDNLPAESLLEESYYHEINPKQGFIFQRVYTDDRALDETMAVEHQNAVIVPEGYHPVGVPDGYDSYYLNVMAGPKRVWEFHNDPDHEWILERD.

Belongs to the isomerase IolB family.

The catalysed reaction is 5-deoxy-D-glucuronate = 5-dehydro-2-deoxy-D-gluconate. It functions in the pathway polyol metabolism; myo-inositol degradation into acetyl-CoA; acetyl-CoA from myo-inositol: step 4/7. Functionally, involved in the isomerization of 5-deoxy-glucuronate (5DG) to 5-dehydro-2-deoxy-D-gluconate (DKG or 2-deoxy-5-keto-D-gluconate). The chain is 5-deoxy-glucuronate isomerase from Listeria monocytogenes serovar 1/2a (strain ATCC BAA-679 / EGD-e).